The following is a 670-amino-acid chain: UvrABC system protein B (670 aa).

A Helicase ATP-binding domain is found at 26–183 (EGLENGLAHQ…RRLSELQYSR (158 aa)). 39–46 (GVTGSGKT) lines the ATP pocket. The Beta-hairpin motif lies at 92–115 (YYDYYQPEAYVPSSDTFIEKDASV). The Helicase C-terminal domain maps to 431-597 (QVDDLLSEIR…GLNKKIGDIL (167 aa)). The tract at residues 600–620 (GQPSTRGKGKGRGGKVADTNN) is disordered. The 36-residue stretch at 630–665 (DQKIRELEAKMYTHAQNLEFEQAAELRDQVHQLRQQ) folds into the UVR domain.

The protein belongs to the UvrB family. As to quaternary structure, forms a heterotetramer with UvrA during the search for lesions. Interacts with UvrC in an incision complex.

It localises to the cytoplasm. In terms of biological role, the UvrABC repair system catalyzes the recognition and processing of DNA lesions. A damage recognition complex composed of 2 UvrA and 2 UvrB subunits scans DNA for abnormalities. Upon binding of the UvrA(2)B(2) complex to a putative damaged site, the DNA wraps around one UvrB monomer. DNA wrap is dependent on ATP binding by UvrB and probably causes local melting of the DNA helix, facilitating insertion of UvrB beta-hairpin between the DNA strands. Then UvrB probes one DNA strand for the presence of a lesion. If a lesion is found the UvrA subunits dissociate and the UvrB-DNA preincision complex is formed. This complex is subsequently bound by UvrC and the second UvrB is released. If no lesion is found, the DNA wraps around the other UvrB subunit that will check the other stand for damage. The polypeptide is UvrABC system protein B (Yersinia enterocolitica serotype O:8 / biotype 1B (strain NCTC 13174 / 8081)).